Reading from the N-terminus, the 553-residue chain is COP9 signalosome complex subunit 10 (553 aa).

Positions 21–46 (AEMEEDSDEMGVYEEETSQGAEEEVP) are enriched in acidic residues. A disordered region spans residues 21–47 (AEMEEDSDEMGVYEEETSQGAEEEVPL). The PCI domain maps to 298–474 (LRTHFSACLQ…DYVYFGDEPR (177 aa)).

As to quaternary structure, component of a COP9 signalosome-like (CSN) complex.

The protein resides in the cytoplasm. The protein localises to the nucleus. Its function is as follows. Component of the COP9 signalosome (CSN) complex that acts as an regulator of the ubiquitin (Ubl) conjugation pathway by mediating the deneddylation of the cullin subunit of SCF-type E3 ubiquitin-protein ligase complexes. The CSN complex is involved in the regulation of the mating pheromone response. The chain is COP9 signalosome complex subunit 10 (RRI2) from Eremothecium gossypii (strain ATCC 10895 / CBS 109.51 / FGSC 9923 / NRRL Y-1056) (Yeast).